Reading from the N-terminus, the 252-residue chain is Deoxyuridine 5'-triphosphate nucleotidohydrolase, mitochondrial (252 aa).

The transit peptide at 1-69 (MTPLCPRPAL…AGRLSQGCRG (69 aa)) directs the protein to the mitochondrion. 3 positions are modified to phosphoserine: Cys-11, Ser-88, and Ser-99. Positions 78–104 (WKGELPKAGGSPAPGPETPAISPSKRA) are disordered. Residues 173–175 (RSG), 187–193 (GVIDEDY), Gly-198, Arg-241, and 246–247 (FG) contribute to the dUTP site.

Belongs to the dUTPase family. As to quaternary structure, homotrimer. The cofactor is Mg(2+). Post-translationally, nuclear isoform 2 is phosphorylated in vivo on Ser-11, a reaction that can be catalyzed in vitro by CDC2. Phosphorylation in mature T-cells occurs in a cell cycle-dependent manner. Isoform 3 is not phosphorylated. Found in a variety of tissues. Isoform 3 expression is constitutive, while isoform 2 expression correlates with the onset of DNA replication (at protein level). Isoform 2 degradation coincides with the cessation of nuclear DNA replication (at protein level).

Its subcellular location is the nucleus. It is found in the mitochondrion. It carries out the reaction dUTP + H2O = dUMP + diphosphate + H(+). The protein operates within pyrimidine metabolism; dUMP biosynthesis; dUMP from dCTP (dUTP route): step 2/2. With respect to regulation, phosphorylation is necessary for activity. Catalyzes the cleavage of 2'-deoxyuridine 5'-triphosphate (dUTP) into 2'-deoxyuridine 5'-monophosphate (dUMP) and inorganic pyrophosphate and through its action efficiently prevents uracil misincorporation into DNA and at the same time provides dUMP, the substrate for de novo thymidylate biosynthesis. Inhibits peroxisome proliferator-activated receptor (PPAR) activity by binding of its N-terminal to PPAR, preventing the latter's dimerization with retinoid X receptor. Essential for embryonic development. The chain is Deoxyuridine 5'-triphosphate nucleotidohydrolase, mitochondrial (DUT) from Homo sapiens (Human).